We begin with the raw amino-acid sequence, 906 residues long: Cadherin-2A (906 aa).

A signal peptide spans 1–28 (MCRKEPFLLPTALCILAALVLHQGPVEA). The propeptide occupies 29 to 160 (LGGSRLCKTG…KHNGLQRQKR (132 aa)). Cadherin domains are found at residues 161–268 (DWVI…RPEF), 269–383 (LHQI…PPEF), 384–498 (TAMT…NPYF), 499–604 (TPNP…DNAP), and 605–714 (YVYP…TTAP). The Extracellular portion of the chain corresponds to 161–724 (DWVIPPINVP…IIGTGLGTGA (564 aa)). Residues Glu171, Asp227, Glu229, Asp260, Met261, Asn262, Asp263, and Asn264 each coordinate Ca(2+). N-linked (GlcNAc...) asparagine glycosylation occurs at Asn274. Ca(2+) is bound by residues Asp294, Asp296, and Asn302. N-linked (GlcNAc...) asparagine glycosylation is present at Asn326. Asp354 lines the Ca(2+) pocket. Residues Asn403, Asn573, Asn623, Asn652, and Asn693 are each glycosylated (N-linked (GlcNAc...) asparagine). A helical transmembrane segment spans residues 725–746 (IIAILLCIIILLTLVLMFVVWM). Residues 747–906 (KRRDKERQAK…LADMYGGSDD (160 aa)) lie on the Cytoplasmic side of the membrane. Disordered regions lie at residues 775-800 (EEGGGEEDQDYDLSQLQQPDTVEPDT) and 863-884 (SGSTAGSLSSLNSSSSGGEQDY). Residues 776–785 (EGGGEEDQDY) are compositionally biased toward acidic residues. Low complexity predominate over residues 863–880 (SGSTAGSLSSLNSSSSGG).

Homodimer (via extracellular region). Can also form heterodimers with other cadherins (via extracellular region). Dimerization occurs in trans, i.e. with a cadherin chain from another cell.

The protein resides in the cell membrane. The protein localises to the sarcolemma. It is found in the cell junction. Its subcellular location is the cell surface. It localises to the desmosome. The protein resides in the adherens junction. In terms of biological role, calcium-dependent cell adhesion protein; preferentially mediates homotypic cell-cell adhesion. Cadherins may thus contribute to the sorting of heterogeneous cell types, and thereby play an important role during embryonic development. Required for proper neurite branching. Required for pre- and postsynaptic organization. In Xenopus laevis (African clawed frog), this protein is Cadherin-2A (cdh2-a).